A 96-amino-acid chain; its full sequence is UPF0235 protein YggU (96 aa).

The protein belongs to the UPF0235 family.

The protein is UPF0235 protein YggU of Escherichia coli O127:H6 (strain E2348/69 / EPEC).